The primary structure comprises 423 residues: MRFSIISLVSLPLFLGLTYAGGVEKDERNNVCTVKANGKQKDDMPNLFKAFKECGNGGTIIFPEDQSYWIGTRLNPLLNDVTVQWRGKWTFSDNLDYRRNNSFPVAFQNHRVGFIISGHNVTIDGNGNTWYTAEKGVTQSGRPMPFVFWNVSEVNVENFYVKDPPLWSLNIMNGTNMRFNNIYCNATSVDAPYGYNWVQNTDGFGSFSAVNTMDAVNIQLTNFVYQGGDDCITIKPRSYNIDIQNVTCVGGNGIAVGSLGQYLEDSSVENVRVDKVKIIRYNEDMHNSAYIKTWVGALVPQSSYESAGLPCGGGWGNVRNILFSNFEVQGANAGPSVNQDSGNNGSYSGSSLMTVSNIVFANFTGYTSGGTSVTSKVSCSEVHPCYNIEFDDVLLYPGKNASNLGTGSCKYTANGGVHGLEGC.

Residues 1–20 (MRFSIISLVSLPLFLGLTYA) form the signal peptide. N-linked (GlcNAc...) asparagine glycosylation is found at Asn-100, Asn-120, Asn-150, Asn-173, and Asn-185. The active-site Proton donor is the Asp-229. Cys-231 and Cys-248 form a disulfide bridge. N-linked (GlcNAc...) asparagine glycosylation occurs at Asn-245. Asn-252 is a catalytic residue. Residues Asn-344 and Asn-362 are each glycosylated (N-linked (GlcNAc...) asparagine). A disulfide bridge connects residues Cys-379 and Cys-385. Asn-400 carries an N-linked (GlcNAc...) asparagine glycan. Cys-409 and Cys-423 are joined by a disulfide.

It belongs to the glycosyl hydrolase 28 family.

Its subcellular location is the secreted. The enzyme catalyses [(1-&gt;4)-alpha-D-galacturonosyl](n) + H2O = alpha-D-galacturonate + [(1-&gt;4)-alpha-D-galacturonosyl](n-1). Specific in hydrolyzing the terminal glycosidic bond of polygalacturonic acid and oligogalacturonates. The polypeptide is Putative galacturan 1,4-alpha-galacturonidase C (rgxC) (Neosartorya fischeri (strain ATCC 1020 / DSM 3700 / CBS 544.65 / FGSC A1164 / JCM 1740 / NRRL 181 / WB 181) (Aspergillus fischerianus)).